Consider the following 250-residue polypeptide: Homeobox protein Dlx4a (250 aa).

Residues 123-182 (IRKPRTIYSSLQLQALNQRFQQTQYLALPERADLAAKLGLTQTQVKIWFQNKRSKYKKIM) constitute a DNA-binding region (homeobox). A disordered region spans residues 182-202 (MKHGSSGPEGEHLQAASASGA).

The protein belongs to the distal-less homeobox family.

It localises to the nucleus. This Danio rerio (Zebrafish) protein is Homeobox protein Dlx4a (dlx4a).